A 548-amino-acid chain; its full sequence is Probable aquaglyceroporin-4 (548 aa).

Over residues 1 to 22 the composition is skewed to polar residues; the sequence is MAGTQDQSQDYFSKPTTPSTPG. Disordered regions lie at residues 1 to 63, 76 to 101, and 158 to 270; these read MAGT…LPST, SRGF…SHFH, and KEET…ESGD. The Cytoplasmic segment spans residues 1-290; that stretch reads MAGTQDQSQD…ARLRARHPEP (290 aa). Basic and acidic residues predominate over residues 38 to 48; sequence PDRESGTERAK. 2 stretches are compositionally biased toward polar residues: residues 77-97 and 171-200; these read RGFS…PQHS and SRTT…SRTT. The span at 249-265 shows a compositional bias: basic and acidic residues; that stretch reads PDFKVDGEPLGHQEKPC. Residues 291-311 form a helical membrane-spanning segment; that stretch reads LAEFLATAVAIFLGLTGTLSV. Residue Asn312 is glycosylated (N-linked (GlcNAc...) asparagine). At 312-327 the chain is on the extracellular side; that stretch reads NLSATQSQPYGTYETS. The helical transmembrane segment at 328-348 threads the bilayer; sequence CWAWGFAWMFGIYLGGGVSGA. Over 349-369 the chain is Cytoplasmic; sequence HMNPAISVSLSIFRGFPWRQC. The NPA 1 motif lies at 351-353; the sequence is NPA. The chain crosses the membrane as a helical span at residues 370 to 390; it reads VIYVFVQFIASIVAGALAYAM. The Extracellular segment spans residues 391 to 420; it reads YADSINHVDPDMTKMSMTFFSTPREWVTLK. The chain crosses the membrane as a helical span at residues 421–441; sequence SAFFNQVVGSAIMMIAVFALG. Residues 442-448 lie on the Cytoplasmic side of the membrane; it reads DDQNNPP. Residues 449 to 469 form a helical membrane-spanning segment; sequence GAGMHALVLGFLVTTLKFTLG. Residues 470–508 lie on the Extracellular side of the membrane; the sequence is YNIGSALNPASDFGPRVIAYAVGFRGDNVFHSGWWFYGP. An NPA 2 motif is present at residues 477 to 479; the sequence is NPA. Residues 509-529 traverse the membrane as a helical segment; the sequence is WAATLIGSLLGCTLYDGFVFV. At 530 to 548 the chain is on the cytoplasmic side; the sequence is GSESPVNFRVDKRVKKLFN.

Belongs to the MIP/aquaporin (TC 1.A.8) family.

Its subcellular location is the membrane. It catalyses the reaction H2O(in) = H2O(out). It carries out the reaction glycerol(in) = glycerol(out). In terms of biological role, probable water/glycerol channel that may have redundant functions with FgAQP2. The protein is Probable aquaglyceroporin-4 of Gibberella zeae (strain ATCC MYA-4620 / CBS 123657 / FGSC 9075 / NRRL 31084 / PH-1) (Wheat head blight fungus).